Reading from the N-terminus, the 209-residue chain is Potassium-transporting ATPase KdpC subunit (209 aa).

A helical transmembrane segment spans residues 18 to 38; that stretch reads ALALFVLLGLGLGYSLVATGI.

This sequence belongs to the KdpC family. In terms of assembly, the system is composed of three essential subunits: KdpA, KdpB and KdpC.

Its subcellular location is the cell inner membrane. Its function is as follows. Part of the high-affinity ATP-driven potassium transport (or Kdp) system, which catalyzes the hydrolysis of ATP coupled with the electrogenic transport of potassium into the cytoplasm. This subunit acts as a catalytic chaperone that increases the ATP-binding affinity of the ATP-hydrolyzing subunit KdpB by the formation of a transient KdpB/KdpC/ATP ternary complex. This is Potassium-transporting ATPase KdpC subunit from Xanthomonas campestris pv. campestris (strain 8004).